Reading from the N-terminus, the 401-residue chain is Nodulation protein E (401 aa).

One can recognise a Ketosynthase family 3 (KS3) domain in the interval 2 to 400; the sequence is DRRVVITGIG…GTNAVLAFRQ (399 aa). Catalysis depends on for beta-ketoacyl synthase activity residues cysteine 162, histidine 294, and histidine 331. A helical transmembrane segment spans residues 329-348; that stretch reads HAHCLGAASALEMIACVMAI.

The protein belongs to the thiolase-like superfamily. Beta-ketoacyl-ACP synthases family.

It is found in the cell inner membrane. Its function is as follows. Proposed to synthesize NOD factor fatty acyl chain. Involved in the synthesis of a highly unsaturated fatty acid moiety, which forms part of a lipo-oligosaccharide that is responsible for host specificity. The protein is Nodulation protein E (nodE) of Rhizobium leguminosarum bv. trifolii.